The primary structure comprises 175 residues: NADH dehydrogenase [ubiquinone] 1 alpha subcomplex assembly factor 4 (175 aa).

A lipid anchor (N-myristoyl glycine) is attached at glycine 2. Serine 35 carries the phosphoserine modification.

This sequence belongs to the NDUFAF4 family. As to quaternary structure, binds calmodulin. Interacts with NDUFAF3. In terms of assembly, (Microbial infection) Interacts with the vesicular stomatitis virus matrix protein/M; the interaction inhibits viral propagation. Phosphorylated on serine. Prolactin stimulate serine phosphorylation.

The protein localises to the mitochondrion. It localises to the membrane. In terms of biological role, involved in the assembly of mitochondrial NADH:ubiquinone oxidoreductase complex (complex I). May be involved in cell proliferation and survival of hormone-dependent tumor cells. May be a regulator of breast tumor cell invasion. The polypeptide is NADH dehydrogenase [ubiquinone] 1 alpha subcomplex assembly factor 4 (Homo sapiens (Human)).